We begin with the raw amino-acid sequence, 99 residues long: Putative membrane protein insertion efficiency factor (99 aa).

This sequence belongs to the UPF0161 family.

The protein resides in the cell membrane. Could be involved in insertion of integral membrane proteins into the membrane. In Levilactobacillus brevis (strain ATCC 367 / BCRC 12310 / CIP 105137 / JCM 1170 / LMG 11437 / NCIMB 947 / NCTC 947) (Lactobacillus brevis), this protein is Putative membrane protein insertion efficiency factor.